The primary structure comprises 1103 residues: Ubiquitin carboxyl-terminal hydrolase 7 (1103 aa).

Residues 1-11 are compositionally biased toward low complexity; sequence MNHQQQQQQQQ. Disordered regions lie at residues 1 to 41 and 46 to 65; these read MNHQ…TQNP and NVTLSDGHSNAEEDMEDDTS. The tract at residues 1 to 209 is interaction with TSPYL5; it reads MNHQQQQQQQ…APHGVAWDSK (209 aa). S19 is modified (phosphoserine). Residues 20–32 are compositionally biased toward acidic residues; that stretch reads EPEDMEMEAGDTD. A phosphoserine mark is found at S50 and S54. The interval 54–209 is interaction with p53/TP53 and MDM2; the sequence is SNAEEDMEDD…APHGVAWDSK (156 aa). Residues 69 to 196 form the MATH domain; sequence EATFQFTVER…DDKVTFEVFV (128 aa). The necessary for nuclear localization stretch occupies residues 71–206; the sequence is TFQFTVERFS…QADAPHGVAW (136 aa). In terms of domain architecture, USP spans 215 to 522; that stretch reads VGLKNQGATC…NAYMLVYIRE (308 aa). The Nucleophile role is filled by C224. H465 functions as the Proton acceptor in the catalytic mechanism. K870 is modified (N6-acetyllysine; alternate). K870 is covalently cross-linked (Glycyl lysine isopeptide (Lys-Gly) (interchain with G-Cter in SUMO2); alternate). K870 is covalently cross-linked (Glycyl lysine isopeptide (Lys-Gly) (interchain with G-Cter in ubiquitin); alternate). K883 participates in a covalent cross-link: Glycyl lysine isopeptide (Lys-Gly) (interchain with G-Cter in SUMO2). S964 carries the phosphoserine modification. 2 positions are modified to N6-acetyllysine: K1085 and K1097.

It belongs to the peptidase C19 family. Monomer. Homodimer. Part of a complex with DAXX, MDM2, RASSF1 and USP7. Part of a complex with DAXX, MDM2 and USP7. Interacts with MDM2; the interaction is independent of p53/TP53. Interacts with DAXX; the interaction is direct and independent of MDM2 and p53/TP53. Component of a complex composed of KMT2E, OGT and USP7; the complex stabilizes KMT2E, preventing KMT2E ubiquitination and proteasomal-mediated degradation. Interacts (via MATH domain) with KMT2E. Interacts with OGT. Interacts with FOXO4; the interaction is enhanced in presence of hydrogen peroxide and occurs independently of p53/TP53. Interacts with p53/TP53; the interaction is enhanced in response to DNA damage; the interaction is impaired by TSPYL5. Interacts with PTEN; the interaction is direct. Interacts with ATXN1 and the strength of interaction is influenced by the length of the poly-Gln region in ATXN1. A weaker interaction seen with mutants having longer poly-Gln regions. Interacts with KIAA1530/UVSSA. Interacts with MEX3C and antagonizes its ability to degrade mRNA. Interacts with DNMT1 and UHRF1. Interacts with FOXP3. Interacts (via MATH domain) with RNF220. Associated component of the Polycomb group (PcG) multiprotein PRC1-like complex. Interacts with EPOP. Interacts with OTUD4 and USP9X; the interaction is direct. Interacts with CRY2. Interacts with REST. Interacts with ERCC6. Part of a complex consisting of USP7, MAGEL2 and TRIM27; directly interacts with MAGEL2; directly interacts with TRIM27. Polyneddylated. Post-translationally, not sumoylated. In terms of processing, polyubiquitinated. Ubiquitinated at Lys-870. As to expression, widely expressed. High expression is detected in brain, bone marrow, thymus and testis.

The protein resides in the nucleus. Its subcellular location is the cytoplasm. It is found in the PML body. It localises to the chromosome. The catalysed reaction is Thiol-dependent hydrolysis of ester, thioester, amide, peptide and isopeptide bonds formed by the C-terminal Gly of ubiquitin (a 76-residue protein attached to proteins as an intracellular targeting signal).. Its function is as follows. Hydrolase that deubiquitinates target proteins such as ARMC5, FOXO4, DEPTOR, KAT5, p53/TP53, MDM2, ERCC6, DNMT1, UHRF1, PTEN, KMT2E/MLL5 and DAXX. Together with DAXX, prevents MDM2 self-ubiquitination and enhances the E3 ligase activity of MDM2 towards p53/TP53, thereby promoting p53/TP53 ubiquitination and proteasomal degradation. Deubiquitinates p53/TP53, preventing degradation of p53/TP53, and enhances p53/TP53-dependent transcription regulation, cell growth repression and apoptosis. Deubiquitinates p53/TP53 and MDM2 and strongly stabilizes p53/TP53 even in the presence of excess MDM2, and also induces p53/TP53-dependent cell growth repression and apoptosis. Deubiquitination of FOXO4 in presence of hydrogen peroxide is not dependent on p53/TP53 and inhibits FOXO4-induced transcriptional activity. In association with DAXX, is involved in the deubiquitination and translocation of PTEN from the nucleus to the cytoplasm, both processes that are counteracted by PML. Deubiquitinates KMT2E preventing KMT2E proteasomal-mediated degradation. Involved in cell proliferation during early embryonic development. Involved in transcription-coupled nucleotide excision repair (TC-NER) in response to UV damage: recruited to DNA damage sites following interaction with KIAA1530/UVSSA and promotes deubiquitination of ERCC6, preventing UV-induced degradation of ERCC6. Involved in maintenance of DNA methylation via its interaction with UHRF1 and DNMT1: acts by mediating deubiquitination of UHRF1 and DNMT1, preventing their degradation and promoting DNA methylation by DNMT1. Deubiquitinates alkylation repair enzyme ALKBH3. OTUD4 recruits USP7 and USP9X to stabilize ALKBH3, thereby promoting the repair of alkylated DNA lesions. Acts as a chromatin regulator via its association with the Polycomb group (PcG) multiprotein PRC1-like complex; may act by deubiquitinating components of the PRC1-like complex. Able to mediate deubiquitination of histone H2B; it is however unsure whether this activity takes place in vivo. Exhibits a preference towards 'Lys-48'-linked ubiquitin chains. Increases regulatory T-cells (Treg) suppressive capacity by deubiquitinating and stabilizing the transcription factor FOXP3 which is crucial for Treg cell function. Plays a role in the maintenance of the circadian clock periodicity via deubiquitination and stabilization of the CRY1 and CRY2 proteins. Deubiquitinates REST, thereby stabilizing REST and promoting the maintenance of neural progenitor cells. Deubiquitinates SIRT7, inhibiting SIRT7 histone deacetylase activity and regulating gluconeogenesis. Involved in the regulation of WASH-dependent actin polymerization at the surface of endosomes and the regulation of endosomal protein recycling. It maintains optimal WASH complex activity and precise F-actin levels via deubiquitination of TRIM27 and WASHC1. Mediates the deubiquitination of phosphorylated DEPTOR, promoting its stability and leading to decreased mTORC1 signaling. This Mus musculus (Mouse) protein is Ubiquitin carboxyl-terminal hydrolase 7 (Usp7).